The sequence spans 556 residues: Formate--tetrahydrofolate ligase (556 aa).

Residue 65-72 (TPAGEGKS) participates in ATP binding.

It belongs to the formate--tetrahydrofolate ligase family.

It carries out the reaction (6S)-5,6,7,8-tetrahydrofolate + formate + ATP = (6R)-10-formyltetrahydrofolate + ADP + phosphate. It participates in one-carbon metabolism; tetrahydrofolate interconversion. This is Formate--tetrahydrofolate ligase from Streptococcus agalactiae serotype V (strain ATCC BAA-611 / 2603 V/R).